Consider the following 180-residue polypeptide: Nudix hydrolase 16, mitochondrial (180 aa).

A Nudix hydrolase domain is found at 18–162 (GSRLVAGCIP…WMKDALVEGF (145 aa)). A substrate-binding site is contributed by Phe-60. 4 residues coordinate Mn(2+): Gly-63, Glu-78, Glu-82, and Glu-144. The short motif at 63-84 (GGWENDETVREAAAREAVEEAG) is the Nudix box element.

Belongs to the Nudix hydrolase family. Mg(2+) is required as a cofactor. Requires Mn(2+) as cofactor. In terms of tissue distribution, expressed in roots, leaves, stems and inflorescences.

Its subcellular location is the mitochondrion. Probably mediates the hydrolysis of some nucleoside diphosphate derivatives. The sequence is that of Nudix hydrolase 16, mitochondrial (NUDT16) from Arabidopsis thaliana (Mouse-ear cress).